Reading from the N-terminus, the 775-residue chain is 5-methyltetrahydropteroyltriglutamate--homocysteine methyltransferase (775 aa).

5-methyltetrahydropteroyltri-L-glutamate-binding positions include 16 to 19 (REMK) and Lys115. Residues 435–437 (IGS) and Glu488 each bind L-homocysteine. L-methionine-binding positions include 435–437 (IGS) and Glu488. Residues 519–520 (RC) and Trp565 contribute to the 5-methyltetrahydropteroyltri-L-glutamate site. Asp603 serves as a coordination point for L-homocysteine. Asp603 contributes to the L-methionine binding site. Residue Glu609 coordinates 5-methyltetrahydropteroyltri-L-glutamate. 3 residues coordinate Zn(2+): His645, Cys647, and Glu669. His698 serves as the catalytic Proton donor. A Zn(2+)-binding site is contributed by Cys730.

Belongs to the vitamin-B12 independent methionine synthase family. Zn(2+) is required as a cofactor.

It carries out the reaction 5-methyltetrahydropteroyltri-L-glutamate + L-homocysteine = tetrahydropteroyltri-L-glutamate + L-methionine. The protein operates within amino-acid biosynthesis; L-methionine biosynthesis via de novo pathway; L-methionine from L-homocysteine (MetE route): step 1/1. Catalyzes the transfer of a methyl group from 5-methyltetrahydrofolate to homocysteine resulting in methionine formation. This Coxiella burnetii (strain Dugway 5J108-111) protein is 5-methyltetrahydropteroyltriglutamate--homocysteine methyltransferase.